The primary structure comprises 496 residues: MSKPIRVRYAPSPTGLLHIGNARTALFNYLYARRHGGTFIIRIEDTDRKRHVEDGERSQLENLKWLGMDWDESPETHENYRQSERLALYQQYIDQLLAEGKAYKSYVTEEELAAERERQEAAGETPRYINEFIGMSADEKAKYIAEREAAGIVPTVRLAVNESGIYKWTDMVKGDIEFEGGNIGGDWVIQKKDGYPTYNFAVVVDDHDMQISHVIRGDDHIANTPKQLMVYEALGWEAPEFGHMTLIINSETGKKLSKRDTNTLQFIEDYRKKGYMPEAVFNFIALLGWNPGGEEEIFSREQLIALFDENRLSKSPAAFDQKKMDWMSNEYLKHADFETVYALCKPFLEEAGRLTEKAEKLVELYKPQLKSADEIIPLTDLFFSDFPELTEAEKEVMAGETVSTVLQAFKAKLEAMSDEDFKPENIFPQIKAVQKETGIKGKNLFMPIRIAVSGEMHGPELPNTIYLLGRDKSIEHIKNHAIRLYRSPLFLNALRS.

The short motif at 11-21 (PSPTGLLHIGN) is the 'HIGH' region element. Residues 255–259 (KLSKR) carry the 'KMSKS' region motif. Lys-258 contributes to the ATP binding site.

It belongs to the class-I aminoacyl-tRNA synthetase family. Glutamate--tRNA ligase type 1 subfamily. As to quaternary structure, monomer.

It is found in the cytoplasm. The enzyme catalyses tRNA(Glu) + L-glutamate + ATP = L-glutamyl-tRNA(Glu) + AMP + diphosphate. In terms of biological role, catalyzes the attachment of glutamate to tRNA(Glu) in a two-step reaction: glutamate is first activated by ATP to form Glu-AMP and then transferred to the acceptor end of tRNA(Glu). In Streptococcus pyogenes serotype M49 (strain NZ131), this protein is Glutamate--tRNA ligase.